Consider the following 329-residue polypeptide: ADP-L-glycero-D-manno-heptose-6-epimerase (329 aa).

Residues 10–11 (FI), 31–32 (DD), Lys38, Lys53, 74–78 (QGACS), and Asn91 each bind NADP(+). Tyr138 acts as the Proton acceptor in catalysis. Lys142 contacts NADP(+). Asn167 is a binding site for substrate. NADP(+) contacts are provided by Val168 and Lys176. Lys176 functions as the Proton acceptor in the catalytic mechanism. Residues Arg178, His185, 199–202 (FAGW), Arg212, and Tyr291 contribute to the substrate site.

This sequence belongs to the NAD(P)-dependent epimerase/dehydratase family. HldD subfamily. Homopentamer. It depends on NADP(+) as a cofactor.

The enzyme catalyses ADP-D-glycero-beta-D-manno-heptose = ADP-L-glycero-beta-D-manno-heptose. The protein operates within nucleotide-sugar biosynthesis; ADP-L-glycero-beta-D-manno-heptose biosynthesis; ADP-L-glycero-beta-D-manno-heptose from D-glycero-beta-D-manno-heptose 7-phosphate: step 4/4. Its pathway is bacterial outer membrane biogenesis; LPS core biosynthesis. In terms of biological role, catalyzes the interconversion between ADP-D-glycero-beta-D-manno-heptose and ADP-L-glycero-beta-D-manno-heptose via an epimerization at carbon 6 of the heptose. The sequence is that of ADP-L-glycero-D-manno-heptose-6-epimerase from Bordetella pertussis (strain Tohama I / ATCC BAA-589 / NCTC 13251).